We begin with the raw amino-acid sequence, 819 residues long: Leucine--tRNA ligase (819 aa).

Positions 42–52 (PYPSGRLHMGH) match the 'HIGH' region motif. The short motif at 576 to 580 (KMSKS) is the 'KMSKS' region element. Residue Lys-579 participates in ATP binding.

The protein belongs to the class-I aminoacyl-tRNA synthetase family.

Its subcellular location is the cytoplasm. It catalyses the reaction tRNA(Leu) + L-leucine + ATP = L-leucyl-tRNA(Leu) + AMP + diphosphate. The chain is Leucine--tRNA ligase from Nitrosococcus oceani (strain ATCC 19707 / BCRC 17464 / JCM 30415 / NCIMB 11848 / C-107).